The following is a 101-amino-acid chain: Capsid assembly scaffolding protein (101 aa).

A disordered region spans residues 1-24 (MPMERDSHEEILNKLNDPELEHSE). The stretch at 79–99 (EEIKQEELSETITIEDLEKQA) forms a coiled coil.

It belongs to the phi29likevirus scaffolding protein family. Homodimer. Interacts non-specifically with DNA; probably binds DNA in the early stages of DNA packaging.

In terms of biological role, scaffolding protein involved in the icosahedric procapsid assembly. Coassembles with the capsid proteins to form the procapsid. The scaffolding protein is found within the capsid as a serie of concentric shells. During DNA packaging, the scaffolding protein molecules are released from the procapsid. The protein is Capsid assembly scaffolding protein (7) of Bacillus subtilis (Bacteriophage B103).